A 186-amino-acid polypeptide reads, in one-letter code: ADP-ribosylation factor-like protein 8A (186 aa).

Residues 1–19 (MLALFNKLLDWFRALFWKE) constitute an intramembrane region (note=Mediates targeting to membranes). GTP-binding positions include 29-35 (QYSGKTT), 71-75 (DIGGQ), and 130-133 (NKRD).

This sequence belongs to the small GTPase superfamily. Arf family.

The protein localises to the late endosome membrane. It is found in the lysosome membrane. The protein resides in the cytoplasm. It localises to the cytoskeleton. Its subcellular location is the spindle. The protein localises to the cell projection. It is found in the axon. The protein resides in the synapse. Plays a role in lysosome motility. In neurons, mediates the anterograde axonal long-range transport of presynaptic lysosome-related vesicles required for presynaptic biogenesis and synaptic function. May play a role in chromosome segregation. The polypeptide is ADP-ribosylation factor-like protein 8A (ARL8A) (Gallus gallus (Chicken)).